The primary structure comprises 417 residues: 3-oxoacyl-[acyl-carrier-protein] synthase 2 (417 aa).

Positions 10–416 constitute a Ketosynthase family 3 (KS3) domain; it reads FPYVVVTGIA…GHNVAIAFGR (407 aa). Residues C170, H311, and H346 each act as for beta-ketoacyl synthase activity in the active site.

It belongs to the thiolase-like superfamily. Beta-ketoacyl-ACP synthases family.

It is found in the cytoplasm. The catalysed reaction is an ultra-long-chain di-unsaturated fatty acyl-[ACP] + malonyl-[ACP] + H(+) = a 3-oxo-ultra-long-chain di-unsaturated fatty acyl-[ACP] + holo-[ACP] + CO2. Its pathway is lipid metabolism; mycolic acid biosynthesis. Part of the mycobacterial fatty acid elongation system FAS-II, which is involved in mycolic acid biosynthesis. Catalyzes the elongation of long chain acyl-ACP substrates by the addition of two carbons from malonyl-ACP to an acyl acceptor. Involved in extension of the mycolate chains to full lengths and produces longer chain multiunsaturated hydrocarbons averaging 54 carbons in length. The polypeptide is 3-oxoacyl-[acyl-carrier-protein] synthase 2 (kasB) (Mycobacterium bovis (strain ATCC BAA-935 / AF2122/97)).